The following is a 248-amino-acid chain: Protein-lysine N-methyltransferase EFM5 (248 aa).

The protein belongs to the class I-like SAM-binding methyltransferase superfamily. EFM5 family.

Its subcellular location is the cytoplasm. Functionally, S-adenosyl-L-methionine-dependent protein-lysine N-methyltransferase that trimethylates elongation factor 1-alpha (TEF1 and TEF2) at 'Lys-79'. Required for replication of Brome mosaic virus (BMV). The polypeptide is Protein-lysine N-methyltransferase EFM5 (Saccharomyces cerevisiae (strain ATCC 204508 / S288c) (Baker's yeast)).